The following is a 524-amino-acid chain: RNA-directed RNA polymerase (524 aa).

Positions 220–340 (QSIAQIDFSS…NFETALCRQE (121 aa)) constitute a RdRp catalytic domain.

It catalyses the reaction RNA(n) + a ribonucleoside 5'-triphosphate = RNA(n+1) + diphosphate. Functionally, RNA-dependent RNA polymerase which replicates the viral genome. The polypeptide is RNA-directed RNA polymerase (Cryptosporidium parvum).